The chain runs to 156 residues: Putative F-box protein R637 (156 aa).

One can recognise an F-box domain in the interval 4 to 51 (HISSLLNEDCVRHIMCFLTDKEKGKFCLTCRDLLYLIKDVKFNDPVNK).

The polypeptide is Putative F-box protein R637 (Acanthamoeba polyphaga mimivirus (APMV)).